The primary structure comprises 382 residues: Homeobox protein bagpipe (382 aa).

3 disordered regions span residues 27–66 (NDIL…SKSP), 144–178 (TSND…KKRS), and 314–382 (QPIP…VEID). The span at 48-62 (EPEKLKPSSDRERSI) shows a compositional bias: basic and acidic residues. Low complexity predominate over residues 158-170 (SSPSESPLSHDGS). Positions 175–234 (KKRSRAAFSHAQVFELERRFAQQRYLSGPERSEMAKSLRLTETQVKIWFQNRRYKTKRKQ) form a DNA-binding region, homeobox. A compositionally biased stretch (low complexity) spans 321 to 335 (QSSSFVTASSASSSP). Residues 373–382 (EDVDENVEID) are compositionally biased toward acidic residues.

This sequence belongs to the NK-3 homeobox family. In terms of tissue distribution, is expressed in a segmented pattern in visceral muscle and in a subset of cardiac muscles. Loss of activity results in segmental gaps in midgut visceral muscle.

Its subcellular location is the nucleus. Functionally, involved in the determination of cell fates in the dorsal mesoderm. This is Homeobox protein bagpipe (bap) from Drosophila melanogaster (Fruit fly).